Consider the following 689-residue polypeptide: UvrABC system protein B (689 aa).

The segment at 1–26 (MSDASGPLQPDRPEADVPFRVEAPFD) is disordered. Positions 40–422 (AGYEQGAQQQ…ERAQSANVVE (383 aa)) constitute a Helicase ATP-binding domain. Position 53-60 (53-60 (GVTGSGKT)) interacts with ATP. Residues 106–129 (YYNYYQPEAYVEQTDKYIEKDASI) carry the Beta-hairpin motif. The 163-residue stretch at 443–605 (QVEDLMDRID…TTPTTIEKAV (163 aa)) folds into the Helicase C-terminal domain. In terms of domain architecture, UVR spans 632–667 (ALLVEDLEARMEDAASNLEFELAADIRDRMRELREA). The interval 668–689 (FDLDGGDAPEDPGGVAPETEDW) is disordered.

This sequence belongs to the UvrB family. In terms of assembly, forms a heterotetramer with UvrA during the search for lesions. Interacts with UvrC in an incision complex.

The protein localises to the cytoplasm. Its function is as follows. The UvrABC repair system catalyzes the recognition and processing of DNA lesions. A damage recognition complex composed of 2 UvrA and 2 UvrB subunits scans DNA for abnormalities. Upon binding of the UvrA(2)B(2) complex to a putative damaged site, the DNA wraps around one UvrB monomer. DNA wrap is dependent on ATP binding by UvrB and probably causes local melting of the DNA helix, facilitating insertion of UvrB beta-hairpin between the DNA strands. Then UvrB probes one DNA strand for the presence of a lesion. If a lesion is found the UvrA subunits dissociate and the UvrB-DNA preincision complex is formed. This complex is subsequently bound by UvrC and the second UvrB is released. If no lesion is found, the DNA wraps around the other UvrB subunit that will check the other stand for damage. The sequence is that of UvrABC system protein B from Halobacterium salinarum (strain ATCC 700922 / JCM 11081 / NRC-1) (Halobacterium halobium).